The following is a 273-amino-acid chain: Putative phosphoenolpyruvate synthase regulatory protein (273 aa).

153 to 160 is a binding site for ADP; that stretch reads AVSRAGKT.

It belongs to the pyruvate, phosphate/water dikinase regulatory protein family. PSRP subfamily.

The catalysed reaction is [pyruvate, water dikinase] + ADP = [pyruvate, water dikinase]-phosphate + AMP + H(+). It catalyses the reaction [pyruvate, water dikinase]-phosphate + phosphate + H(+) = [pyruvate, water dikinase] + diphosphate. Functionally, bifunctional serine/threonine kinase and phosphorylase involved in the regulation of the phosphoenolpyruvate synthase (PEPS) by catalyzing its phosphorylation/dephosphorylation. This Xylella fastidiosa (strain 9a5c) protein is Putative phosphoenolpyruvate synthase regulatory protein.